A 285-amino-acid polypeptide reads, in one-letter code: MSTERGLKDSIAGTVAGAACLFTGHPFDTIRVRLQTSNTPIGIMECFRNTIKYEGFSGLYKGVTSPLFGMMFETAVLFAGYGQMKVLLQKDENTPLTVGQCAIAGGFAGVGASVVLTPVELVKCRLQVQTTGPQKYKGSLDCLVQILKEGGIRGAYRGFTPTIAREFVGNMAFFSTYETCKRYFKNKENKPNDDDELNLPALIISGGLGGMAYWTVLYPVDVAKSKIQISEGAGPSPSIVKVLKEIYSKEGVKGLFRGYTPTIIRSFPANAAMFSVYELVIKLLG.

Residues 1 to 9 are Mitochondrial intermembrane-facing; the sequence is MSTERGLKD. Solcar repeat units follow at residues 4–87, 96–183, and 197–283; these read ERGL…MKVL, LTVG…CKRY, and LNLP…VIKL. The chain crosses the membrane as a helical span at residues 10–30; the sequence is SIAGTVAGAACLFTGHPFDTI. Topologically, residues 31–61 are mitochondrial matrix; it reads RVRLQTSNTPIGIMECFRNTIKYEGFSGLYK. The chain crosses the membrane as a helical span at residues 62–82; sequence GVTSPLFGMMFETAVLFAGYG. Topologically, residues 83–101 are mitochondrial intermembrane; the sequence is QMKVLLQKDENTPLTVGQC. A helical membrane pass occupies residues 102 to 122; that stretch reads AIAGGFAGVGASVVLTPVELV. The Mitochondrial matrix portion of the chain corresponds to 123–150; sequence KCRLQVQTTGPQKYKGSLDCLVQILKEG. The helical transmembrane segment at 151 to 172 threads the bilayer; that stretch reads GIRGAYRGFTPTIAREFVGNMA. Topologically, residues 173–199 are mitochondrial intermembrane; sequence FFSTYETCKRYFKNKENKPNDDDELNL. A helical membrane pass occupies residues 200–220; sequence PALIISGGLGGMAYWTVLYPV. At 221–258 the chain is on the mitochondrial matrix side; sequence DVAKSKIQISEGAGPSPSIVKVLKEIYSKEGVKGLFRG. Residues 259 to 277 form a helical membrane-spanning segment; it reads YTPTIIRSFPANAAMFSVY. Residues 278–285 are Mitochondrial intermembrane-facing; the sequence is ELVIKLLG.

It belongs to the mitochondrial carrier (TC 2.A.29) family.

It is found in the mitochondrion inner membrane. Its function is as follows. Mitochondrial solute carriers shuttle metabolites, nucleotides, and cofactors through the mitochondrial inner membrane. Mediates the transport of acylcarnitines of different length across the mitochondrial inner membrane from the cytosol to the mitochondrial matrix for their oxidation by the mitochondrial fatty acid-oxidation pathway. In Dictyostelium discoideum (Social amoeba), this protein is Mitochondrial substrate carrier family protein S (mcfS).